A 1508-amino-acid polypeptide reads, in one-letter code: Pleiotropic ABC efflux transporter of multiple drugs CDR1 (1508 aa).

Residues 1–30 (MSEKPFVDAPPPEDGVAHQVSPHDNGSLSE) are disordered. At 1-524 (MSEKPFVDAP…NFLRMKGDPS (524 aa)) the chain is on the cytoplasmic side. In terms of domain architecture, ABC transporter 1 spans 165–415 (DYWHDMRKID…FLDMGYECPQ (251 aa)). The helical transmembrane segment at 525–545 (IVIFSIFGQGVMGLILSSVFY) threads the bilayer. At 546 to 559 (NLQPTTGSFYYRGA) the chain is on the extracellular side. The chain crosses the membrane as a helical span at residues 560-580 (AMFFAVLFNAFASLLEIMSLF). Residues 581-608 (EARPIVEKHKKYALYRPSADALASIISE) lie on the Cytoplasmic side of the membrane. The chain crosses the membrane as a helical span at residues 609–629 (LPVKLCMSTCFNFSFYFMVHF). Over 630 to 633 (RRDP) the chain is Extracellular. Residues 634-654 (GRFFFYWLFCGLCTLCMSHMF) form a helical membrane-spanning segment. At 655 to 673 (RSLGAVSTSLAAAMTPATS) the chain is on the cytoplasmic side. Residues 674–694 (VLLAMVIFTGFVIPIPSMLGW) traverse the membrane as a helical segment. At 695-775 (CRWIQYINPV…EYVNAHKWRN (81 aa)) the chain is on the extracellular side. A helical membrane pass occupies residues 776–796 (LGIVVAYIVVFLGVYIALTEF). Residues 797–1203 (NKGAMQKGEI…TFQQYWRSPG (407 aa)) lie on the Cytoplasmic side of the membrane. The interval 839 to 860 (KISYSDAMEKDSGESSTSDDKL) is disordered. A compositionally biased stretch (basic and acidic residues) spans 845 to 860 (AMEKDSGESSTSDDKL). Residues 867–1110 (FHWKDLTYQV…GLIDYFEKHG (244 aa)) form the ABC transporter 2 domain. 903 to 910 (GASGAGKT) contacts ATP. The helical transmembrane segment at 1204-1224 (YIYSKFFLVITASLFNGFAFF) threads the bilayer. Over 1225-1239 (HSGTSQQGLQNQMFS) the chain is Extracellular. A helical membrane pass occupies residues 1240–1260 (MFMFYMPLQTLIQQMLPYYVM). The Cytoplasmic portion of the chain corresponds to 1261–1288 (QREIYEVREAPSRTFSWFAFIASQITTE). A helical membrane pass occupies residues 1289–1309 (IPFQVVLGTVAFFCWYYPVGL). At 1310–1326 (YQNATPTDTVHERGALM) the chain is on the extracellular side. A helical membrane pass occupies residues 1327–1347 (WLLVTAFYVYTISLGQMVVAF). The Cytoplasmic portion of the chain corresponds to 1348–1362 (MEIADNAANMVNLMF). A helical membrane pass occupies residues 1363–1383 (IMCLNFCGVLATPEALPGFWI). Residues 1384–1475 (FMYRCNPFTY…HAVYSERWRN (92 aa)) are Extracellular-facing. A helical transmembrane segment spans residues 1476-1496 (FGIFIAFIAINMIGTIFFYWL). Residues 1497–1508 (ARVPKSSKSKNH) are Cytoplasmic-facing.

It belongs to the ABC transporter superfamily.

The protein localises to the cell membrane. It carries out the reaction fluconazole(in) + ATP + H2O = fluconazole(out) + ADP + phosphate + H(+). It catalyses the reaction itraconazole(in) + ATP + H2O = itraconazole(out) + ADP + phosphate + H(+). The enzyme catalyses voriconazole(in) + ATP + H2O = voriconazole(out) + ADP + phosphate + H(+). Its activity is regulated as follows. The bis-benzodioxolylindolinone azoffluxin acts as an inhibitor of the transporter activity. Clorgyline analogs M19 and M25 inhibit the transcporter activity by uncoupling CDR1 ATPase activity from the active transport of substrates. Activity is also inhibited by beauvericin and oligomycin. Its function is as follows. Pleiotropic ABC efflux transporter that confers resistance to numerous chemicals including itraconazole, fluconazole, voriconazole and posaconazole. This is Pleiotropic ABC efflux transporter of multiple drugs CDR1 from Candidozyma auris (Yeast).